The chain runs to 438 residues: Minor capsid protein p49 (438 aa).

The interval P134 to T167 is disordered. Over residues K144–T167 the composition is skewed to polar residues.

It belongs to the asfivirus p49 structural protein family.

The protein resides in the virion. Its function is as follows. Together with the penton and the other minor capsid proteins (M1249L, p17), forms a complicated network immediately below the outer capsid shell, stabilizing the whole capsid. Plays an essential role in the formation of infectious virus particles. Especially required for the formation of the capsid vertices. During virion assembly, associates with the membrane and probably mediates the docking of the penton complex to the inner membrane, where it recruits the capsomers to form the penton core. The protein is Minor capsid protein p49 of Ornithodoros (relapsing fever ticks).